Consider the following 584-residue polypeptide: Pentatricopeptide repeat-containing protein At2g01510, mitochondrial (584 aa).

Residues 1–20 (MLAKQTPLTKQMLSELLRAS) constitute a mitochondrion transit peptide. PPR repeat units lie at residues 73–107 (RIFL…GVRP), 108–142 (DEFT…GFGC), 143–173 (LGIV…MQVK), 174–208 (DLVA…AVQF), 209–243 (DSFT…EIDC), 244–274 (NIIV…MKQR), 275–309 (NVVS…GLRP), 310–344 (NYVT…NDKN), and 348–378 (RKEH…MPVE). Positions 383-458 (IWGALLGACA…VAAYSSVEFE (76 aa)) are type E motif. Residues 459–489 (GKIHFFNRGDKSHPQSKAIYEKLDEILKKIR) are type E(+) motif. The tract at residues 490–584 (KMGYVPDTCS…NGVCSCKEFW (95 aa)) is type DYW motif.

The protein belongs to the PPR family. PCMP-H subfamily.

The protein resides in the mitochondrion. This Arabidopsis thaliana (Mouse-ear cress) protein is Pentatricopeptide repeat-containing protein At2g01510, mitochondrial (PCMP-H37).